The chain runs to 233 residues: Fibrillarin-like rRNA/tRNA 2'-O-methyltransferase (233 aa).

S-adenosyl-L-methionine contacts are provided by residues 89–90 (TT), 108–109 (EF), 133–134 (DA), and 153–156 (DIAQ).

This sequence belongs to the methyltransferase superfamily. Fibrillarin family. In terms of assembly, interacts with nop5. Component of box C/D small ribonucleoprotein (sRNP) particles that contain rpl7ae, FlpA and nop5, plus a guide RNA.

Its function is as follows. Involved in pre-rRNA and tRNA processing. Utilizes the methyl donor S-adenosyl-L-methionine to catalyze the site-specific 2'-hydroxyl methylation of ribose moieties in rRNA and tRNA. Site specificity is provided by a guide RNA that base pairs with the substrate. Methylation occurs at a characteristic distance from the sequence involved in base pairing with the guide RNA. This chain is Fibrillarin-like rRNA/tRNA 2'-O-methyltransferase, found in Sulfurisphaera tokodaii (strain DSM 16993 / JCM 10545 / NBRC 100140 / 7) (Sulfolobus tokodaii).